The chain runs to 406 residues: MIQLRQLSDVIVKDKVVLLRLDLNIPQEGGKITDNTRIVRTIPTIKYLILHGAKVVIISHLGNPKGRIELTLSLRSVVTELEALLNIKVQFCPESIGSTPKNAIIKMKAGEVLLLENLRFNSGEELNDATFVNELSSLGDIYVNDAFSCSHRKHASICGLPAKLPSAAGFLLLSELKHLTSIFSNANKPFTVIIGGAKMSTKLDLLNSLITKADYLIVAGAMANIFLAMKRFNIGASLYKPELVNVASLILKKATSTNCKIILPFDAVIQNFNSNNITIIELNSSLVMQSNAKIMDIGPKTIAQIINIIKISKTIVWNGPVGAFEQLPFDHGSTYLSKAIAEKTRTGSLCSVAGGGDTISAIKKSGVIDDFSYISTGGGAFLEWLQGKTLPGVEALMQKLDTAKYI.

Substrate is bound by residues 22–24 (DLN), Arg37, 60–63 (HLGN), Arg119, and Arg152. Residues Lys202, Glu325, and 355-358 (GGDT) each bind ATP.

This sequence belongs to the phosphoglycerate kinase family. As to quaternary structure, monomer.

The protein localises to the cytoplasm. The enzyme catalyses (2R)-3-phosphoglycerate + ATP = (2R)-3-phospho-glyceroyl phosphate + ADP. The protein operates within carbohydrate degradation; glycolysis; pyruvate from D-glyceraldehyde 3-phosphate: step 2/5. This is Phosphoglycerate kinase from Orientia tsutsugamushi (strain Ikeda) (Rickettsia tsutsugamushi).